Here is a 211-residue protein sequence, read N- to C-terminus: Protein Nef (211 aa).

Positions M1–V38 are disordered. Residue G2 is the site of N-myristoyl glycine; by host attachment. Residue S6 is modified to Phosphoserine; by host. Basic and acidic residues predominate over residues E15–S24. An acidic; interacts with host PACS1 and PACS2; stabilizes the interaction of NEF/MHC-I with host AP1M1; necessary for MHC-I internalization region spans residues K67–D70. The interval P74–P83 is SH3-binding; interaction with Src family tyrosine kinases. The PxxP; stabilizes the interaction of NEF/MHC-I with host AP1M1; necessary for MHC-I internalization motif lies at P77–P80. The interval E113 to W129 is mediates dimerization, Nef-PTE1 interaction. Residues V153–I186 form a binding to ATP6V1H region. Residues L170–L171 carry the Dileucine internalization motif; necessary for CD4 internalization motif. Residues E180–D181 carry the Diacidic; necessary for CD4 internalization motif.

The protein belongs to the lentivirus primate group Nef protein family. As to quaternary structure, monomer; cytosolic form. Homodimer; membrane bound form. Interacts with Nef associated p21-activated kinase (PAK2); this interaction activates PAK2. Associates with the Nef-MHC-I-AP1 complex; this complex is required for MHC-I internalization. Interacts (via C-terminus) with host PI3-kinase. Interacts with host PACS1; this interaction seems to be weak. Interacts with host PACS2. Interacts with host LCK and MAPK3; these interactions inhibit the kinase activity of the latter. Interacts with host ATP6V1H; this interaction may play a role in CD4 endocytosis. Associates with the CD4-Nef-AP2 complex; this complex is required for CD4 internalization. Interacts with host AP2 subunit alpha and AP2 subunit sigma2. Interacts with TCR-zeta chain; this interaction up-regulates the Fas ligand (FasL) surface expression. Interacts with host HCK, LYN, and SRC; these interactions activate the Src family kinases. Interacts with MAP3K5; this interaction inhibits the Fas and TNFR-mediated death signals. Interacts with beta-COP and PTE1. Interacts with human RACK1; this increases Nef phosphorylation by PKC. Interacts with TP53; this interaction decreases the half-life of TP53, protecting the infected cell against p53-mediated apoptosis. In terms of processing, the virion-associated Nef proteins are cleaved by the viral protease to release the soluble C-terminal core protein. Nef is probably cleaved concomitantly with viral structural proteins on maturation of virus particles. Post-translationally, myristoylated. Phosphorylated on serine residues, probably by host PKCdelta and theta.

It is found in the host cell membrane. It localises to the virion. The protein resides in the secreted. The protein localises to the host Golgi apparatus membrane. Its function is as follows. Factor of infectivity and pathogenicity, required for optimal virus replication. Alters numerous pathways of T-lymphocyte function and down-regulates immunity surface molecules in order to evade host defense and increase viral infectivity. Alters the functionality of other immunity cells, like dendritic cells, monocytes/macrophages and NK cells. In infected CD4(+) T-lymphocytes, down-regulates the surface MHC-I, mature MHC-II, CD4, CD28, CCR5 and CXCR4 molecules. Mediates internalization and degradation of host CD4 through the interaction of with the cytoplasmic tail of CD4, the recruitment of AP-2 (clathrin adapter protein complex 2), internalization through clathrin coated pits, and subsequent transport to endosomes and lysosomes for degradation. Diverts host MHC-I molecules to the trans-Golgi network-associated endosomal compartments by an endocytic pathway to finally target them for degradation. MHC-I down-regulation may involve AP-1 (clathrin adapter protein complex 1) or possibly Src family kinase-ZAP70/Syk-PI3K cascade recruited by PACS2. In consequence infected cells are masked for immune recognition by cytotoxic T-lymphocytes. Decreasing the number of immune receptors also prevents reinfection by more HIV particles (superinfection). Down-regulates host SERINC3 and SERINC5 thereby excluding these proteins from the viral particles. Virion infectivity is drastically higher when SERINC3 or SERINC5 are excluded from the viral envelope, because these host antiviral proteins impair the membrane fusion event necessary for subsequent virion penetration. In terms of biological role, bypasses host T-cell signaling by inducing a transcriptional program nearly identical to that of anti-CD3 cell activation. Interaction with TCR-zeta chain up-regulates the Fas ligand (FasL). Increasing surface FasL molecules and decreasing surface MHC-I molecules on infected CD4(+) cells send attacking cytotoxic CD8+ T-lymphocytes into apoptosis. Functionally, plays a role in optimizing the host cell environment for viral replication without causing cell death by apoptosis. Protects the infected cells from apoptosis in order to keep them alive until the next virus generation is ready to strike. Inhibits the Fas and TNFR-mediated death signals by blocking MAP3K5/ASK1. Decreases the half-life of TP53, protecting the infected cell against p53-mediated apoptosis. Inhibits the apoptotic signals regulated by the Bcl-2 family proteins through the formation of a Nef/PI3-kinase/PAK2 complex that leads to activation of PAK2 and induces phosphorylation of host BAD. Its function is as follows. Extracellular Nef protein targets CD4(+) T-lymphocytes for apoptosis by interacting with CXCR4 surface receptors. This is Protein Nef from Human immunodeficiency virus type 1 group O (isolate MVP5180) (HIV-1).